Reading from the N-terminus, the 201-residue chain is Probable chemoreceptor glutamine deamidase CheD 1 (201 aa).

This sequence belongs to the CheD family.

It carries out the reaction L-glutaminyl-[protein] + H2O = L-glutamyl-[protein] + NH4(+). In terms of biological role, probably deamidates glutamine residues to glutamate on methyl-accepting chemotaxis receptors (MCPs), playing an important role in chemotaxis. This is Probable chemoreceptor glutamine deamidase CheD 1 from Dechloromonas aromatica (strain RCB).